Reading from the N-terminus, the 446-residue chain is Glucose-6-phosphate isomerase (446 aa).

Glu-288 functions as the Proton donor in the catalytic mechanism. Active-site residues include His-309 and Lys-423.

This sequence belongs to the GPI family.

It localises to the cytoplasm. It catalyses the reaction alpha-D-glucose 6-phosphate = beta-D-fructose 6-phosphate. The protein operates within carbohydrate biosynthesis; gluconeogenesis. Its pathway is carbohydrate degradation; glycolysis; D-glyceraldehyde 3-phosphate and glycerone phosphate from D-glucose: step 2/4. Functionally, catalyzes the reversible isomerization of glucose-6-phosphate to fructose-6-phosphate. The protein is Glucose-6-phosphate isomerase of Lactobacillus delbrueckii subsp. bulgaricus (strain ATCC 11842 / DSM 20081 / BCRC 10696 / JCM 1002 / NBRC 13953 / NCIMB 11778 / NCTC 12712 / WDCM 00102 / Lb 14).